The following is a 248-amino-acid chain: Type II secretion system protein N (248 aa).

The Cytoplasmic segment spans residues 1-6 (MKLKSG). Residues 7–27 (IVTGVALVLAYGLFLASYAPA) form a helical; Signal-anchor for type II membrane protein membrane-spanning segment. The Periplasmic segment spans residues 28–248 (RLLTAVPLPA…RTLNFQGRLL (221 aa)).

This sequence belongs to the GSP N family.

The protein resides in the cell inner membrane. Its function is as follows. Involved in a type II secretion system (T2SS, formerly general secretion pathway, GSP) for the export of proteins. Required for the translocation of the multiple pectic enzymes. This is Type II secretion system protein N (outN) from Pectobacterium carotovorum subsp. carotovorum (Erwinia carotovora subsp. carotovora).